The chain runs to 420 residues: Gamma-glutamyl phosphate reductase (420 aa).

This sequence belongs to the gamma-glutamyl phosphate reductase family.

The protein resides in the cytoplasm. The enzyme catalyses L-glutamate 5-semialdehyde + phosphate + NADP(+) = L-glutamyl 5-phosphate + NADPH + H(+). It participates in amino-acid biosynthesis; L-proline biosynthesis; L-glutamate 5-semialdehyde from L-glutamate: step 2/2. Catalyzes the NADPH-dependent reduction of L-glutamate 5-phosphate into L-glutamate 5-semialdehyde and phosphate. The product spontaneously undergoes cyclization to form 1-pyrroline-5-carboxylate. This chain is Gamma-glutamyl phosphate reductase, found in Cereibacter sphaeroides (strain ATCC 17023 / DSM 158 / JCM 6121 / CCUG 31486 / LMG 2827 / NBRC 12203 / NCIMB 8253 / ATH 2.4.1.) (Rhodobacter sphaeroides).